Here is a 185-residue protein sequence, read N- to C-terminus: MSKEVLNQTKEKMEKAVQAYGRELATVRAGRANASLLDKVTVDYYGAQTPLNQIASITVPEARMLIITPYDKTAIGDIEKSIQKSDLGITPTSDGNVIRIAIPALTEERRKELVKVVRKYSEEAKVAVRNVRRDANDELKKLEKNGEITEDELRSSTEDVQKLTDEYVAKIDDVMKDKEKEIMEV.

The protein belongs to the RRF family.

It localises to the cytoplasm. Its function is as follows. Responsible for the release of ribosomes from messenger RNA at the termination of protein biosynthesis. May increase the efficiency of translation by recycling ribosomes from one round of translation to another. This is Ribosome-recycling factor from Bacillus pumilus (strain SAFR-032).